The primary structure comprises 593 residues: Aspartate--tRNA(Asp/Asn) ligase (593 aa).

Position 172 (glutamate 172) interacts with L-aspartate. An aspartate region spans residues 196 to 199 (QLFK). Arginine 218 lines the L-aspartate pocket. ATP is bound by residues 218-220 (RDE) and glutamine 227. Histidine 450 contributes to the L-aspartate binding site. Position 484 (glutamate 484) interacts with ATP. Position 491 (arginine 491) interacts with L-aspartate. Residue 536-539 (GLDR) coordinates ATP.

Belongs to the class-II aminoacyl-tRNA synthetase family. Type 1 subfamily. As to quaternary structure, homodimer.

It localises to the cytoplasm. It catalyses the reaction tRNA(Asx) + L-aspartate + ATP = L-aspartyl-tRNA(Asx) + AMP + diphosphate. Aspartyl-tRNA synthetase with relaxed tRNA specificity since it is able to aspartylate not only its cognate tRNA(Asp) but also tRNA(Asn). Reaction proceeds in two steps: L-aspartate is first activated by ATP to form Asp-AMP and then transferred to the acceptor end of tRNA(Asp/Asn). This chain is Aspartate--tRNA(Asp/Asn) ligase, found in Nitrosomonas eutropha (strain DSM 101675 / C91 / Nm57).